The following is a 1244-amino-acid chain: Protein STU1 (1244 aa).

HEAT repeat units lie at residues 87 to 124 (LQGR…AASA) and 159 to 196 (LLFR…SAPP). The span at 232–243 (ETSSSFQSQSRS) shows a compositional bias: low complexity. Disordered stretches follow at residues 232 to 326 (ETSS…GEGV), 561 to 758 (LLER…EPDV), and 795 to 998 (AFQG…DPVK). 4 stretches are compositionally biased toward polar residues: residues 261 to 271 (RSQSVLSMRSH), 287 to 312 (KSQS…SSES), 574 to 591 (ASQS…STKS), and 607 to 622 (ASSN…QSSF). Low complexity-rich tracts occupy residues 652-663 (SASLSSAPMRPA), 690-703 (AQSK…SPQK), and 837-850 (PPSR…YSSR). Composition is skewed to basic and acidic residues over residues 863–872 (LDSRRSRGES) and 979–998 (KVEG…DPVK). 2 HEAT repeats span residues 1038–1075 (TKYE…VLVT) and 1126–1163 (CNPP…SGLL).

The protein belongs to the CLASP family. Interacts with microtubules.

It is found in the cytoplasm. The protein resides in the cytoskeleton. The protein localises to the nucleus. It localises to the spindle. Functionally, microtubule binding protein that promotes the stabilization of dynamic microtubules. Required for mitotic spindle formation. The sequence is that of Protein STU1 (STU1) from Coccidioides immitis (strain RS) (Valley fever fungus).